The following is a 627-amino-acid chain: uncharacterized protein (627 aa).

A WH1 domain is found at Gly21–Ser136. The segment at Arg310 to Val347 is disordered.

This is an uncharacterized protein from Caenorhabditis elegans.